A 408-amino-acid polypeptide reads, in one-letter code: Aspartate aminotransferase, cytoplasmic (408 aa).

3 residues coordinate L-aspartate: G36, W133, and N187. K251 bears the N6-(pyridoxal phosphate)lysine mark. Residue R379 coordinates L-aspartate.

It belongs to the class-I pyridoxal-phosphate-dependent aminotransferase family. Homodimer. It depends on pyridoxal 5'-phosphate as a cofactor. In terms of tissue distribution, expressed in all somatic tissues including the nervous system.

The protein resides in the cytoplasm. It catalyses the reaction L-aspartate + 2-oxoglutarate = oxaloacetate + L-glutamate. Its function is as follows. Biosynthesis of L-glutamate from L-aspartate. Important regulator of levels of glutamate, the major excitatory neurotransmitter of the central nervous system. In Caenorhabditis elegans, this protein is Aspartate aminotransferase, cytoplasmic.